A 194-amino-acid chain; its full sequence is Xanthine phosphoribosyltransferase (194 aa).

2 residues coordinate xanthine: Leu-20 and Asn-27. Residue 128–132 coordinates 5-phospho-alpha-D-ribose 1-diphosphate; sequence ANGQA. Lys-156 contributes to the xanthine binding site.

This sequence belongs to the purine/pyrimidine phosphoribosyltransferase family. Xpt subfamily. Homodimer.

It localises to the cytoplasm. The catalysed reaction is XMP + diphosphate = xanthine + 5-phospho-alpha-D-ribose 1-diphosphate. Its pathway is purine metabolism; XMP biosynthesis via salvage pathway; XMP from xanthine: step 1/1. Functionally, converts the preformed base xanthine, a product of nucleic acid breakdown, to xanthosine 5'-monophosphate (XMP), so that it can be reused for RNA or DNA synthesis. The sequence is that of Xanthine phosphoribosyltransferase (xpt) from Bacillus subtilis (strain 168).